The chain runs to 694 residues: Phosphatase and actin regulator 4-A (694 aa).

Composition is skewed to basic and acidic residues over residues 1–13 (MEDR…DHSE) and 46–72 (SSDS…ELIK). 5 disordered regions span residues 1–29 (MEDR…KSKF), 42–169 (RKRK…QPLP), 192–403 (VNEV…HIRI), 426–445 (LFMQ…RSLP), and 450–572 (LLKV…QIRQ). The stretch at 55-80 (EVLERKISTRKPREELIKRGLLVEVP) is one RPEL 1 repeat. Over residues 240 to 267 (SISTSVTQESAVAGQKSDSSNRLQSSAP) the composition is skewed to polar residues. Positions 300-317 (AELSLALAGSPLSPAGSR) are enriched in low complexity. Composition is skewed to pro residues over residues 318 to 327 (PSPPLPPKRA) and 372 to 381 (SNPPVPPLTL). 3 stretches are compositionally biased toward acidic residues: residues 455-467 (DDED…DESL), 499-511 (QEEE…DTDS), and 519-529 (DDEEEEEEEET). RPEL repeat units lie at residues 576–601 (TQLN…QKNE) and 613–638 (RRLT…RFNE).

Belongs to the phosphatase and actin regulator family. As to quaternary structure, binds ppp1ca and actin.

It is found in the cytoplasm. Its subcellular location is the cell projection. The protein localises to the lamellipodium. Its function is as follows. Regulator of protein phosphatase 1 (PP1) required for neural tube and optic fissure closure, and enteric neural crest cell (ENCCs) migration during development. Acts as an activator of PP1. During neural tube closure, localizes to the ventral neural tube and activates PP1, leading to down-regulate cell proliferation within cranial neural tissue and the neural retina. Also acts as a regulator of migration of enteric neural crest cells (ENCCs) by activating PP1, leading to repression of the integrin signaling through the rho/rock pathway. The protein is Phosphatase and actin regulator 4-A (phactr4-a) of Xenopus laevis (African clawed frog).